We begin with the raw amino-acid sequence, 552 residues long: Urocanate hydratase (552 aa).

NAD(+)-binding positions include 49–50, glutamine 127, 173–175, aspartate 193, 239–240, 260–264, 270–271, and tyrosine 319; these read GG, GMG, NA, QTSAH, and YI. Cysteine 407 is an active-site residue. NAD(+) is bound at residue glycine 489.

Belongs to the urocanase family. It depends on NAD(+) as a cofactor.

Its subcellular location is the cytoplasm. It carries out the reaction 4-imidazolone-5-propanoate = trans-urocanate + H2O. It functions in the pathway amino-acid degradation; L-histidine degradation into L-glutamate; N-formimidoyl-L-glutamate from L-histidine: step 2/3. Catalyzes the conversion of urocanate to 4-imidazolone-5-propionate. The protein is Urocanate hydratase of Bacillus mycoides (strain KBAB4) (Bacillus weihenstephanensis).